A 309-amino-acid chain; its full sequence is 2-phosphoglycerate kinase (309 aa).

The ATP-cone domain occupies 5–92; it reads NDIIVRGKSY…LWRMVLGRRP (88 aa).

The protein belongs to the 2-phosphoglycerate kinase family. It depends on a divalent metal cation as a cofactor.

The catalysed reaction is (2R)-2-phosphoglycerate + ATP = (2R)-2,3-bisphosphoglycerate + ADP + H(+). It participates in thermoadapter biosynthesis; cyclic 2,3-diphosphoglycerate biosynthesis; cyclic 2,3-diphosphoglycerate from 2-phospho-D-glycerate: step 1/2. Functionally, catalyzes the phosphorylation of 2-phosphoglycerate to 2,3-diphosphoglycerate. Involved in the biosynthesis of cyclic 2,3-bisphosphoglycerate, a thermoprotectant. This is 2-phosphoglycerate kinase from Methanocaldococcus jannaschii (strain ATCC 43067 / DSM 2661 / JAL-1 / JCM 10045 / NBRC 100440) (Methanococcus jannaschii).